A 199-amino-acid polypeptide reads, in one-letter code: dITP/XTP pyrophosphatase (199 aa).

Residue 8–13 (TSNINK) participates in substrate binding. D68 acts as the Proton acceptor in catalysis. D68 lines the Mg(2+) pocket. Substrate is bound by residues S69, 155–158 (FGYN), K177, and 182–183 (HR).

Belongs to the HAM1 NTPase family. As to quaternary structure, homodimer. The cofactor is Mg(2+).

It carries out the reaction XTP + H2O = XMP + diphosphate + H(+). The enzyme catalyses dITP + H2O = dIMP + diphosphate + H(+). It catalyses the reaction ITP + H2O = IMP + diphosphate + H(+). Its function is as follows. Pyrophosphatase that catalyzes the hydrolysis of nucleoside triphosphates to their monophosphate derivatives, with a high preference for the non-canonical purine nucleotides XTP (xanthosine triphosphate), dITP (deoxyinosine triphosphate) and ITP. Seems to function as a house-cleaning enzyme that removes non-canonical purine nucleotides from the nucleotide pool, thus preventing their incorporation into DNA/RNA and avoiding chromosomal lesions. The protein is dITP/XTP pyrophosphatase of Borrelia recurrentis (strain A1).